A 356-amino-acid polypeptide reads, in one-letter code: Carbohydrate sulfotransferase 10 (356 aa).

The Cytoplasmic portion of the chain corresponds to 1-6 (MHHQWL). The helical; Signal-anchor for type II membrane protein transmembrane segment at 7 to 27 (LLAACFWVIFMFMVASKFITL) threads the bilayer. Topologically, residues 28–356 (TFKDPDVYSA…GYQKPDFLLN (329 aa)) are lumenal. Residue N99 is glycosylated (N-linked (GlcNAc...) asparagine). 3'-phosphoadenylyl sulfate is bound by residues 127 to 133 (PKVGNTQ) and 189 to 197 (RDPFERLIS). N-linked (GlcNAc...) asparagine glycosylation is found at N228 and N316.

The protein belongs to the sulfotransferase 2 family. As to expression, in fetal tissues, it is predominantly expressed in brain, and weakly expressed in lung, kidney and liver. In adult, it is highly expressed in brain, testis, ovary, expressed at intermediate level in heart, pancreas, skeletal muscle, spleen and thymus, and weakly expressed in other tissues. In brain, it is expressed at higher level in the frontal lobe.

Its subcellular location is the golgi apparatus membrane. The enzyme catalyses 3-O-{beta-D-GlcA-(1-&gt;[3)-alpha-D-Xyl-(1-&gt;3)-beta-D-GlcA-(1-&gt;](n)-4)-beta-D-Xyl-(1-&gt;4)-Rib-ol-P-Rib-ol-P-3-beta-D-GalNAc-(1-&gt;3)-beta-D-GlcNAc-(1-&gt;4)-O-6-P-alpha-D-Man}-L-Thr-[protein] + 3'-phosphoadenylyl sulfate = 3-O-{O-3-S-beta-D-GlcA-(1-&gt;[3)-alpha-D-Xyl-(1-&gt;3)-beta-D-GlcA-(1-&gt;](n)-4)-beta-D-Xyl-(1-&gt;4)-Rib-ol-P-Rib-ol-P-3-beta-D-GalNAc-(1-&gt;3)-beta-D-GlcNAc-(1-&gt;4)-O-6-P-alpha-D-Man}-L-Thr-[protein] + adenosine 3',5'-bisphosphate + H(+). The catalysed reaction is 17beta-estradiol 3-O-(beta-D-glucuronate) + 3'-phosphoadenylyl sulfate = 17beta-estradiol 3-O-(3-sulfo-beta-D-glucuronate) + adenosine 3',5'-bisphosphate + H(+). It carries out the reaction 17beta-estradiol 3-O-(beta-D-glucuronate) 17-sulfate + 3'-phosphoadenylyl sulfate = 17beta-estradiol 3-O-(3-sulfo-beta-D-glucuronate) 17-sulfate + adenosine 3',5'-bisphosphate + H(+). It catalyses the reaction 17beta-estradiol 17-O-(beta-D-glucuronate) + 3'-phosphoadenylyl sulfate = 17beta-estradiol 17-O-(3-sulfo-beta-D-glucuronate) + adenosine 3',5'-bisphosphate + H(+). The enzyme catalyses 16alpha,17beta-estriol 3-O-(beta-D-glucuronate) + 3'-phosphoadenylyl sulfate = 16alpha,17beta-estriol 3-O-(3-sulfo-beta-D-glucuronate) + adenosine 3',5'-bisphosphate + H(+). The catalysed reaction is 16alpha,17beta-estriol 16-O-(beta-D-glucuronate) + 3'-phosphoadenylyl sulfate = 16alpha,17beta-estriol 16-O-(3-sulfo-beta-D-glucuronate) + adenosine 3',5'-bisphosphate + H(+). It carries out the reaction 16alpha,17beta-estriol 17-O-(beta-D-glucuronate) + 3'-phosphoadenylyl sulfate = 16alpha,17beta-estriol 17-O-(3-sulfo-beta-D-glucuronate) + adenosine 3',5'-bisphosphate + H(+). It catalyses the reaction estrone 3-O-(beta-D-glucuronate) + 3'-phosphoadenylyl sulfate = estrone 3-O-(3-sulfo-beta-D-glucuronate) + adenosine 3',5'-bisphosphate + H(+). The enzyme catalyses 3alpha,20alpha-dihydroxy-5beta-pregnane 3-O-(beta-D-glucuronate) + 3'-phosphoadenylyl sulfate = 3alpha,20alpha-dihydroxy-5beta-pregnane 3-O-(3-sulfo-beta-D-glucuronate) + adenosine 3',5'-bisphosphate + H(+). The catalysed reaction is testosterone 17-O-(beta-D-glucuronate) + 3'-phosphoadenylyl sulfate = testosterone 17-O-(3-sulfo-beta-D-glucuronate) + adenosine 3',5'-bisphosphate + H(+). It carries out the reaction 3beta-androst-5-en-17-one 3-O-(beta-D-glucuronate) + 3'-phosphoadenylyl sulfate = 3beta-androst-5-en-17-one 3-O-(3-sulfo-beta-D-glucuronate) + adenosine 3',5'-bisphosphate + H(+). It catalyses the reaction 3alpha,17alpha-dihydroxy-5beta-androstane-11-one-17beta-carboxylate 3-O-(beta-D-glucuronate) + 3'-phosphoadenylyl sulfate = 3alpha,17alpha-dihydroxy-5beta-androstane-11-one-17beta-carboxylate 3-O-(3-sulfo-beta-D-glucuronate) + adenosine 3',5'-bisphosphate + H(+). The enzyme catalyses 3alpha-hydroxyetiocholan-17-one 3-O-(beta-D-glucuronate) + 3'-phosphoadenylyl sulfate = 3alpha-hydroxyetiocholan-17-one 3-O-(3-sulfo-beta-D-glucuronate) + adenosine 3',5'-bisphosphate + H(+). It participates in steroid metabolism. The protein operates within protein modification; carbohydrate sulfation. Its function is as follows. Catalyzes the transfer of sulfate from 3'-phosphoadenylyl sulfate (PAPS) to position 3 of terminal glucuronic acid of both protein- and lipid-linked oligosaccharides. Participates in biosynthesis of HNK-1 carbohydrate structure 3-O-sulfo-beta-D-GlcA-(1-&gt;3)-beta-D-Gal-(1-&gt;4)-D-GlcNAc-R, a sulfated glucuronyl-lactosaminyl residue carried by many neural recognition molecules, which is involved in cell interactions during ontogenetic development and in synaptic plasticity in the adult. May be indirectly involved in synapse plasticity of the hippocampus, via its role in HNK-1 biosynthesis. Sulfates terminal glucuronyl residue of the laminin globular (LG)-domain binding epitope on DAG1/alpha-dystroglycan and prevents further polymerization by LARGE1 glycosyltransferase. Likely defines the chain length of LG epitope, conferring binding specificity to extracellular matrix components. Plays a role in down-regulating the steroid hormones. Sulfates glucuronidated estrogens and androgens with an impact in hormone cycle and fertility. Has a preference for glucuronyl moiety at the 3-hydroxyl group of a sterol ring rather than the 17-hydroxyl group, showing high catalytic efficiency for 17beta-estradiol 3-O-(beta-D-glucuronate) and dehydroepiandrosterone 3-O-(beta-D-glucuronate) hormones. This Homo sapiens (Human) protein is Carbohydrate sulfotransferase 10.